Reading from the N-terminus, the 876-residue chain is Beta-glucosidase 1 (876 aa).

An N-terminal signal peptide occupies residues 1 to 17 (MLMIVQLLVFALGLAVA). Residues N22, N75, N224, and N267 are each glycosylated (N-linked (GlcNAc...) asparagine). D295 is a catalytic residue. Residues N332, N339, N372, N389, N426, N544, N585, N739, N780, and N790 are each glycosylated (N-linked (GlcNAc...) asparagine).

It belongs to the glycosyl hydrolase 3 family.

It catalyses the reaction Hydrolysis of terminal, non-reducing beta-D-glucosyl residues with release of beta-D-glucose.. Its pathway is glycan metabolism; cellulose degradation. This is Beta-glucosidase 1 (BGL1) from Saccharomycopsis fibuligera (Yeast).